Consider the following 53-residue polypeptide: UPF0391 membrane protein TM1040_2720 (53 aa).

2 helical membrane-spanning segments follow: residues 4–24 (WALA…GGIA) and 29–48 (GIAQ…ALIL).

This sequence belongs to the UPF0391 family.

Its subcellular location is the cell membrane. The protein is UPF0391 membrane protein TM1040_2720 of Ruegeria sp. (strain TM1040) (Silicibacter sp.).